The chain runs to 134 residues: uncharacterized protein (134 aa).

The helical transmembrane segment at 110-130 threads the bilayer; that stretch reads SLGVLTDILFLVLYSLLIHLS.

It is found in the membrane. This is an uncharacterized protein from Saccharomyces cerevisiae (strain ATCC 204508 / S288c) (Baker's yeast).